The following is a 221-amino-acid chain: Phosphoribosylformylglycinamidine synthase subunit PurQ (221 aa).

In terms of domain architecture, Glutamine amidotransferase type-1 spans 8 to 221 (NVGIIRFPGT…GLKFFKSFLD (214 aa)). C91 serves as the catalytic Nucleophile. Residues H198 and E200 contribute to the active site.

Part of the FGAM synthase complex composed of 1 PurL, 1 PurQ and 2 PurS subunits.

It localises to the cytoplasm. It carries out the reaction N(2)-formyl-N(1)-(5-phospho-beta-D-ribosyl)glycinamide + L-glutamine + ATP + H2O = 2-formamido-N(1)-(5-O-phospho-beta-D-ribosyl)acetamidine + L-glutamate + ADP + phosphate + H(+). The enzyme catalyses L-glutamine + H2O = L-glutamate + NH4(+). It participates in purine metabolism; IMP biosynthesis via de novo pathway; 5-amino-1-(5-phospho-D-ribosyl)imidazole from N(2)-formyl-N(1)-(5-phospho-D-ribosyl)glycinamide: step 1/2. Part of the phosphoribosylformylglycinamidine synthase complex involved in the purines biosynthetic pathway. Catalyzes the ATP-dependent conversion of formylglycinamide ribonucleotide (FGAR) and glutamine to yield formylglycinamidine ribonucleotide (FGAM) and glutamate. The FGAM synthase complex is composed of three subunits. PurQ produces an ammonia molecule by converting glutamine to glutamate. PurL transfers the ammonia molecule to FGAR to form FGAM in an ATP-dependent manner. PurS interacts with PurQ and PurL and is thought to assist in the transfer of the ammonia molecule from PurQ to PurL. This Methanosphaera stadtmanae (strain ATCC 43021 / DSM 3091 / JCM 11832 / MCB-3) protein is Phosphoribosylformylglycinamidine synthase subunit PurQ.